The sequence spans 331 residues: (E)-beta farnesene synthase MBR_03882 (331 aa).

It belongs to the trichodiene synthase family.

The enzyme catalyses (2E,6E)-farnesyl diphosphate = (E)-beta-farnesene + diphosphate. In terms of biological role, terpene synthase that catalyzes the conversion of (2E,6E)-farnesyl diphosphate (FPP) into the volatile sesquiterpene (E)-beta-farnesene. This chain is (E)-beta farnesene synthase MBR_03882, found in Metarhizium brunneum (strain ARSEF 3297).